A 237-amino-acid chain; its full sequence is Proteasome subunit beta (237 aa).

The disordered stretch occupies residues 1 to 27; sequence MSKFPDLPGMKNLDANPYEPELASFDD. Residues 1–42 constitute a propeptide, removed in mature form; by autocatalysis; sequence MSKFPDLPGMKNLDANPYEPELASFDDMDADAGDGDAVAKTG. Residue T43 is the Nucleophile of the active site.

This sequence belongs to the peptidase T1B family. As to quaternary structure, the 20S proteasome core is composed of 14 alpha and 14 beta subunits that assemble into four stacked heptameric rings, resulting in a barrel-shaped structure. The two inner rings, each composed of seven catalytic beta subunits, are sandwiched by two outer rings, each composed of seven alpha subunits. The catalytic chamber with the active sites is on the inside of the barrel. Has a gated structure, the ends of the cylinder being occluded by the N-termini of the alpha-subunits. Is capped at one or both ends by the proteasome regulatory ATPase, PAN.

It is found in the cytoplasm. The enzyme catalyses Cleavage of peptide bonds with very broad specificity.. The formation of the proteasomal ATPase PAN-20S proteasome complex, via the docking of the C-termini of PAN into the intersubunit pockets in the alpha-rings, triggers opening of the gate for substrate entry. Interconversion between the open-gate and close-gate conformations leads to a dynamic regulation of the 20S proteasome proteolysis activity. Its function is as follows. Component of the proteasome core, a large protease complex with broad specificity involved in protein degradation. The polypeptide is Proteasome subunit beta (Halomicrobium mukohataei (strain ATCC 700874 / DSM 12286 / JCM 9738 / NCIMB 13541) (Haloarcula mukohataei)).